Here is a 416-residue protein sequence, read N- to C-terminus: Hemagglutinin-esterase (416 aa).

The first 14 residues, 1–14 (MLSLILFFPSFAFA), serve as a signal peptide directing secretion. The esterase domain first part stretch occupies residues 4–121 (LILFFPSFAF…GVDSYMELKT (118 aa)). The Virion surface portion of the chain corresponds to 15–393 (VTPVTPYFGP…ESVDVISSSY (379 aa)). S37 serves as the catalytic Nucleophile. A disulfide bridge connects residues C41 and C57. 2 N-linked (GlcNAc...) asparagine; by host glycosylation sites follow: N59 and N76. 5 disulfide bridges follow: C88–C136, C108–C156, C192–C273, C200–C246, and C206–C213. Residues 122–263 (SFNIKLNQMA…GTHNASIVGN (142 aa)) form a receptor binding region. N257, N278, and N294 each carry an N-linked (GlcNAc...) asparagine; by host glycan. The interval 264-379 (FLFYPTKSYC…SCPQYVKLFD (116 aa)) is esterase domain second part. A disulfide bridge connects residues C304 and C309. Residue N322 is glycosylated (N-linked (GlcNAc...) asparagine; by host). H328 acts as the Charge relay system in catalysis. N343 carries an N-linked (GlcNAc...) asparagine; by host glycan. The cysteines at positions 346 and 371 are disulfide-linked. The chain crosses the membrane as a helical span at residues 394 to 414 (FVATWVLLVVVVILIFVIISF). The Intravirion segment spans residues 415-416 (FC).

It belongs to the influenza type C/coronaviruses hemagglutinin-esterase family. In terms of assembly, homodimer. In terms of processing, N-glycosylated.

The protein localises to the virion membrane. It localises to the host cell membrane. The enzyme catalyses N-acetyl-9-O-acetylneuraminate + H2O = N-acetylneuraminate + acetate + H(+). The catalysed reaction is N-acetyl-4-O-acetylneuraminate + H2O = N-acetylneuraminate + acetate + H(+). In terms of biological role, structural protein that makes short spikes at the surface of the virus. Contains receptor binding and receptor-destroying activities. Mediates de-O-acetylation of N-acetyl-9-O-acetylneuraminic acid, which is probably the receptor determinant recognized by the virus on the surface of erythrocytes and susceptible cells. This receptor-destroying activity is important for virus release as it probably helps preventing self-aggregation and ensures the efficient spread of the progeny virus from cell to cell. May serve as a secondary viral attachment protein for initiating infection, the spike protein being the major one. Seems to be a 'luxury' protein that is not absolutely necessary for virus infection in culture. However, its presence in the virus may alter its pathogenicity. May become a target for both the humoral and the cellular branches of the immune system. This chain is Hemagglutinin-esterase (HE), found in Homo sapiens (Human).